The primary structure comprises 1394 residues: Ninein-like protein (1394 aa).

EF-hand domains lie at 8–43 (HYVS…LGLE) and 42–77 (LEEQ…VLSS). 2 disordered regions span residues 77–99 (SGSG…SCAV) and 126–166 (KYGS…KEPQ). Ser149 is subject to Phosphoserine. Residues 151–166 (ESLKSDEDAESAKEPQ) show a composition bias toward basic and acidic residues. 2 EF-hand domains span residues 197-232 (TPEN…IGLH) and 234-269 (LEKQ…HEPP). Asp247, Asp249, Asp251, Arg253, and Glu258 together coordinate Ca(2+). 3 coiled-coil regions span residues 382–423 (RQEL…MDDC), 461–515 (WEQA…DSEK), and 544–584 (EQFT…SRQS). The short motif at 494 to 496 (KEN) is the KEN box element. The tract at residues 578 to 602 (LPRSRQSPAGTPGTHRRRIPGRGPA) is disordered. Positions 632 to 640 (RMQLETKVN) match the D-box motif. Residues 835–863 (EKEKLEQTYREQVEGLVQEADVLRALLKN) are a coiled coil. Residues 866–893 (TVVSDQQERTPSSMSLGPDSRQQPTARQ) show a composition bias toward polar residues. A disordered region spans residues 866-977 (TVVSDQQERT…SARTLTGQGQ (112 aa)). Positions 939 to 951 (RSSENLGVRDNHQ) are enriched in basic and acidic residues. 2 coiled-coil regions span residues 1057–1229 (SESE…ELTE) and 1269–1331 (GARV…LRKQ).

As to quaternary structure, interacts with gamma-tubulin and TUBGCP4. Interacts with anaphase promoting complex/cyclosome (APC/C). Interacts with CDC20 and FZR1. Interacts with LCA5 and USH2A. In terms of processing, phosphorylated by PLK1 which disrupts its centrosome association and interaction with gamma-tubulin. Post-translationally, ubiquitinated by the APC/C complex leading to its degradation.

It is found in the cytoplasm. Its subcellular location is the cytoskeleton. The protein resides in the microtubule organizing center. It localises to the centrosome. Its function is as follows. Involved in the microtubule organization in interphase cells. Overexpression induces the fragmentation of the Golgi, and causes lysosomes to disperse toward the cell periphery; it also interferes with mitotic spindle assembly. Involved in vesicle transport in photoreceptor cells. In Mus musculus (Mouse), this protein is Ninein-like protein (Ninl).